Here is a 73-residue protein sequence, read N- to C-terminus: Small ribosomal subunit protein eS27 (73 aa).

Residues cysteine 28, cysteine 31, cysteine 47, and cysteine 50 each contribute to the Zn(2+) site. The C4-type zinc-finger motif lies at 28–50 (CPKCGNRQVVFSHSTFRARCLNC).

This sequence belongs to the eukaryotic ribosomal protein eS27 family. Part of the 30S ribosomal subunit. Zn(2+) is required as a cofactor.

The chain is Small ribosomal subunit protein eS27 from Aeropyrum pernix (strain ATCC 700893 / DSM 11879 / JCM 9820 / NBRC 100138 / K1).